The primary structure comprises 303 residues: Probable aspartoacylase (303 aa).

Positions 13 and 16 each coordinate Zn(2+). Residues R55 and 62-63 (NR) contribute to the substrate site. Zn(2+) is bound at residue H104. Residues E162 and Y273 each coordinate substrate.

This sequence belongs to the AspA/AstE family. Aspartoacylase subfamily. It depends on Zn(2+) as a cofactor.

The enzyme catalyses an N-acyl-L-aspartate + H2O = a carboxylate + L-aspartate. The sequence is that of Probable aspartoacylase from Parasynechococcus marenigrum (strain WH8102).